The following is a 469-amino-acid chain: tRNA(Ile)-lysidine synthase (469 aa).

26-31 contributes to the ATP binding site; it reads SGGPDS.

Belongs to the tRNA(Ile)-lysidine synthase family.

It is found in the cytoplasm. It catalyses the reaction cytidine(34) in tRNA(Ile2) + L-lysine + ATP = lysidine(34) in tRNA(Ile2) + AMP + diphosphate + H(+). Functionally, ligates lysine onto the cytidine present at position 34 of the AUA codon-specific tRNA(Ile) that contains the anticodon CAU, in an ATP-dependent manner. Cytidine is converted to lysidine, thus changing the amino acid specificity of the tRNA from methionine to isoleucine. In Shouchella clausii (strain KSM-K16) (Alkalihalobacillus clausii), this protein is tRNA(Ile)-lysidine synthase.